Reading from the N-terminus, the 73-residue chain is Defensin-like protein 34 (73 aa).

Positions 1-25 are cleaved as a signal peptide; sequence MASNKVSFFLVLCLCVLSTAEFGEA. 3 cysteine pairs are disulfide-bonded: cysteine 33/cysteine 59, cysteine 45/cysteine 68, and cysteine 49/cysteine 70.

This sequence belongs to the DEFL family.

It localises to the secreted. The protein is Defensin-like protein 34 of Arabidopsis thaliana (Mouse-ear cress).